A 630-amino-acid chain; its full sequence is 1-deoxy-D-xylulose-5-phosphate synthase (630 aa).

Residues histidine 72 and 113-115 each bind thiamine diphosphate; that span reads GHS. Aspartate 144 is a Mg(2+) binding site. Residues 145 to 146, asparagine 173, tyrosine 284, and glutamate 367 each bind thiamine diphosphate; that span reads GA. Asparagine 173 is a Mg(2+) binding site.

This sequence belongs to the transketolase family. DXPS subfamily. As to quaternary structure, homodimer. It depends on Mg(2+) as a cofactor. The cofactor is thiamine diphosphate.

The enzyme catalyses D-glyceraldehyde 3-phosphate + pyruvate + H(+) = 1-deoxy-D-xylulose 5-phosphate + CO2. It functions in the pathway metabolic intermediate biosynthesis; 1-deoxy-D-xylulose 5-phosphate biosynthesis; 1-deoxy-D-xylulose 5-phosphate from D-glyceraldehyde 3-phosphate and pyruvate: step 1/1. In terms of biological role, catalyzes the acyloin condensation reaction between C atoms 2 and 3 of pyruvate and glyceraldehyde 3-phosphate to yield 1-deoxy-D-xylulose-5-phosphate (DXP). This chain is 1-deoxy-D-xylulose-5-phosphate synthase, found in Bacillus cereus (strain AH820).